The primary structure comprises 315 residues: DNA-directed RNA polymerase subunit alpha (315 aa).

Residues 1–228 (MLEIEKPKIE…EHFKLFMTLT (228 aa)) form an alpha N-terminal domain (alpha-NTD) region. Residues 245 to 315 (KEKVLEMTIE…LGLSLKLNDE (71 aa)) form an alpha C-terminal domain (alpha-CTD) region.

The protein belongs to the RNA polymerase alpha chain family. As to quaternary structure, homodimer. The RNAP catalytic core consists of 2 alpha, 1 beta, 1 beta' and 1 omega subunit. When a sigma factor is associated with the core the holoenzyme is formed, which can initiate transcription.

It catalyses the reaction RNA(n) + a ribonucleoside 5'-triphosphate = RNA(n+1) + diphosphate. DNA-dependent RNA polymerase catalyzes the transcription of DNA into RNA using the four ribonucleoside triphosphates as substrates. In Clostridium acetobutylicum (strain ATCC 824 / DSM 792 / JCM 1419 / IAM 19013 / LMG 5710 / NBRC 13948 / NRRL B-527 / VKM B-1787 / 2291 / W), this protein is DNA-directed RNA polymerase subunit alpha.